Reading from the N-terminus, the 1116-residue chain is Protein STICHEL-like 1 (1116 aa).

Disordered stretches follow at residues 95-138 and 225-244; these read RTSS…LEET and KFLRGTSKREDSSHTCNSTP. Over residues 115 to 124 the composition is skewed to acidic residues; sequence NDDDDDDDDV. 2 consecutive short sequence motifs (PEST) follow at residues 257–282 and 402–422; these read RNPSTVGSWEDGDDELDDDNLDFKGR and KSQDGEREEEEEGGSTPESIQ. Position 463–470 (463–470) interacts with ATP; the sequence is GPRGTGKT. Cys482, Cys492, Cys495, and Cys498 together coordinate Zn(2+). Residues 726–760 are a coiled coil; that stretch reads EAFLDRRNLTEADLERLKHALKLLSEAEKQLRVST. Residues 777 to 798 form a disordered region; the sequence is PSPGTTHTGSSRRQSSRATEES. A compositionally biased stretch (polar residues) spans 778–793; that stretch reads SPGTTHTGSSRRQSSR.

Belongs to the DnaX/STICHEL family.

The sequence is that of Protein STICHEL-like 1 from Arabidopsis thaliana (Mouse-ear cress).